The following is a 246-amino-acid chain: Phosphonates import ATP-binding protein PhnC (246 aa).

One can recognise an ABC transporter domain in the interval 2–246 (IKFENVSKVY…ILDEVYRKEG (245 aa)). 35–42 (GTSGAGKS) is a binding site for ATP.

The protein belongs to the ABC transporter superfamily. Phosphonates importer (TC 3.A.1.9.1) family. In terms of assembly, the complex is composed of two ATP-binding proteins (PhnC), two transmembrane proteins (PhnE) and a solute-binding protein (PhnD).

The protein localises to the cell membrane. The catalysed reaction is phosphonate(out) + ATP + H2O = phosphonate(in) + ADP + phosphate + H(+). Functionally, part of the ABC transporter complex PhnCDE involved in phosphonates import. Responsible for energy coupling to the transport system. The sequence is that of Phosphonates import ATP-binding protein PhnC from Lactococcus lactis subsp. cremoris (strain SK11).